Reading from the N-terminus, the 81-residue chain is Putative membrane protein insertion efficiency factor (81 aa).

Belongs to the UPF0161 family.

It localises to the cell membrane. Could be involved in insertion of integral membrane proteins into the membrane. The polypeptide is Putative membrane protein insertion efficiency factor (Geobacillus kaustophilus (strain HTA426)).